A 557-amino-acid chain; its full sequence is Formate--tetrahydrofolate ligase (557 aa).

ATP is bound at residue 66 to 73 (TPAGEGKS).

It belongs to the formate--tetrahydrofolate ligase family.

It carries out the reaction (6S)-5,6,7,8-tetrahydrofolate + formate + ATP = (6R)-10-formyltetrahydrofolate + ADP + phosphate. The protein operates within one-carbon metabolism; tetrahydrofolate interconversion. This Clostridium botulinum (strain ATCC 19397 / Type A) protein is Formate--tetrahydrofolate ligase.